Here is a 205-residue protein sequence, read N- to C-terminus: Holliday junction branch migration complex subunit RuvA (205 aa).

Residues 1–64 (MIGRLRGTLA…EDAHLLYGFH (64 aa)) are domain I. Residues 65–143 (EKRERELFRE…AWETSPAMFT (79 aa)) are domain II. The segment at 144-153 (LVSDGPVPVS) is flexible linker. The tract at residues 154–205 (GASTAEADAVSALVSLGYKPQEASKAVSAIKDKAGLSSEELIRRSLKGMITK) is domain III.

The protein belongs to the RuvA family. As to quaternary structure, homotetramer. Forms an RuvA(8)-RuvB(12)-Holliday junction (HJ) complex. HJ DNA is sandwiched between 2 RuvA tetramers; dsDNA enters through RuvA and exits via RuvB. An RuvB hexamer assembles on each DNA strand where it exits the tetramer. Each RuvB hexamer is contacted by two RuvA subunits (via domain III) on 2 adjacent RuvB subunits; this complex drives branch migration. In the full resolvosome a probable DNA-RuvA(4)-RuvB(12)-RuvC(2) complex forms which resolves the HJ.

It is found in the cytoplasm. Its function is as follows. The RuvA-RuvB-RuvC complex processes Holliday junction (HJ) DNA during genetic recombination and DNA repair, while the RuvA-RuvB complex plays an important role in the rescue of blocked DNA replication forks via replication fork reversal (RFR). RuvA specifically binds to HJ cruciform DNA, conferring on it an open structure. The RuvB hexamer acts as an ATP-dependent pump, pulling dsDNA into and through the RuvAB complex. HJ branch migration allows RuvC to scan DNA until it finds its consensus sequence, where it cleaves and resolves the cruciform DNA. This Pseudomonas putida (strain W619) protein is Holliday junction branch migration complex subunit RuvA.